Reading from the N-terminus, the 374-residue chain is Chaperone protein DnaJ (374 aa).

The J domain maps to 5–70 (DFYEILGLGK…QKRDAYDRYG (66 aa)). The segment at 28-47 (LAMKHHPDRNPDSKGAEDKF) is disordered. Positions 35-47 (DRNPDSKGAEDKF) are enriched in basic and acidic residues. The segment at 134–212 (GYDTTIRVPS…CSGAGKIKRN (79 aa)) adopts a CR-type zinc-finger fold. C147, C150, C164, C167, C186, C189, C200, and C203 together coordinate Zn(2+). 4 CXXCXGXG motif repeats span residues 147–154 (CETCDGSG), 164–171 (CTTCGGHG), 186–193 (CPKCHGSG), and 200–207 (CTACSGAG).

This sequence belongs to the DnaJ family. As to quaternary structure, homodimer. Zn(2+) is required as a cofactor.

The protein resides in the cytoplasm. Functionally, participates actively in the response to hyperosmotic and heat shock by preventing the aggregation of stress-denatured proteins and by disaggregating proteins, also in an autonomous, DnaK-independent fashion. Unfolded proteins bind initially to DnaJ; upon interaction with the DnaJ-bound protein, DnaK hydrolyzes its bound ATP, resulting in the formation of a stable complex. GrpE releases ADP from DnaK; ATP binding to DnaK triggers the release of the substrate protein, thus completing the reaction cycle. Several rounds of ATP-dependent interactions between DnaJ, DnaK and GrpE are required for fully efficient folding. Also involved, together with DnaK and GrpE, in the DNA replication of plasmids through activation of initiation proteins. In Herminiimonas arsenicoxydans, this protein is Chaperone protein DnaJ.